Consider the following 188-residue polypeptide: Elongation factor P (188 aa).

This sequence belongs to the elongation factor P family.

Its subcellular location is the cytoplasm. The protein operates within protein biosynthesis; polypeptide chain elongation. Functionally, involved in peptide bond synthesis. Stimulates efficient translation and peptide-bond synthesis on native or reconstituted 70S ribosomes in vitro. Probably functions indirectly by altering the affinity of the ribosome for aminoacyl-tRNA, thus increasing their reactivity as acceptors for peptidyl transferase. This is Elongation factor P from Aeromonas salmonicida (strain A449).